We begin with the raw amino-acid sequence, 627 residues long: Spindle assembly abnormal protein 6 homolog (627 aa).

Residues Val-39–Leu-91 enclose the PISA domain. The stretch at Leu-153–Asn-473 forms a coiled coil. Disordered regions lie at residues Gln-187–Lys-257 and Glu-561–Phe-586. The span at Glu-191 to Ser-201 shows a compositional bias: basic and acidic residues. The span at Glu-202 to Arg-213 shows a compositional bias: polar residues. Residues His-214–Leu-226 are compositionally biased toward basic and acidic residues. The segment covering Gln-229 to Gln-238 has biased composition (low complexity).

In terms of assembly, nine homodimers form a cartwheel structure with an internal diameter of 23 nM and radial spokes connecting to the microtubule triplets.

The protein localises to the cytoplasm. It localises to the cytoskeleton. Its subcellular location is the microtubule organizing center. The protein resides in the centrosome. Its function is as follows. Central scaffolding component of the centrioles ensuring their 9-fold symmetry. Required for centrosome biogenesis and duplication: required both for mother-centriole-dependent centriole duplication and deuterosome-dependent centriole amplification in multiciliated cells. The sequence is that of Spindle assembly abnormal protein 6 homolog (sass6) from Danio rerio (Zebrafish).